We begin with the raw amino-acid sequence, 220 residues long: Histone H1B (220 aa).

Disordered stretches follow at residues Met1 to Ser45 and Gln99 to Lys220. Residues Lys28–Ser45 are compositionally biased toward low complexity. The H15 domain occupies Ser40–Lys113. 4 stretches are compositionally biased toward basic residues: residues Ala122–Lys134, Lys141–Lys151, Ser158–Thr196, and Lys204–Lys220.

The protein belongs to the histone H1/H5 family.

The protein resides in the nucleus. The protein localises to the chromosome. Its function is as follows. Histones H1 are necessary for the condensation of nucleosome chains into higher-order structures. In Xenopus laevis (African clawed frog), this protein is Histone H1B.